Reading from the N-terminus, the 345-residue chain is D(2) dopamine receptor B (345 aa).

Residues 1-10 (EWRFSRIHCD) lie on the Extracellular side of the membrane. Residues C9 and C84 are joined by a disulfide bond. A helical membrane pass occupies residues 11–32 (IFVTLDVMMCTASILNLCAISI). The Cytoplasmic segment spans residues 33 to 53 (DRYTAVAMPMLYNTRYSSKRR). Residues 54–74 (VTVMISVVWVLSFAISCPLLF) traverse the membrane as a helical segment. Residues 75-90 (GLNNTASTVCIIDNPA) lie on the Extracellular side of the membrane. N-linked (GlcNAc...) asparagine glycosylation is present at N77. A helical transmembrane segment spans residues 91 to 115 (FVIYSSIVSFYVPFIVTLLVYVQIY). Over 116 to 275 (IVLRKRRKRV…SQHKEKKATQ (160 aa)) the chain is Cytoplasmic. Positions 166-177 (KKKVEAGNHPED) are enriched in basic and acidic residues. The tract at residues 166–199 (KKKVEAGNHPEDMEMEMMSSTSPPEKTKHKSASP) is disordered. The chain crosses the membrane as a helical span at residues 276-297 (MLAIVLGVFIICWLPFFITHIL). At 298–311 (NMHCNCNIPQALYS) the chain is on the extracellular side. C301 and C303 form a disulfide bridge. The helical transmembrane segment at 312 to 333 (AFTWLGYVNSAVNPIIYTTFNV) threads the bilayer. Residues 334-345 (EFRKAFIKILHC) lie on the Cytoplasmic side of the membrane. C345 carries S-palmitoyl cysteine lipidation.

The protein belongs to the G-protein coupled receptor 1 family. Post-translationally, palmitoylated. Palmitoylation is probably required for proper localization to the plasma membrane and stability of the receptor. Brain; pituitary.

It is found in the cell membrane. It localises to the golgi apparatus membrane. In terms of biological role, this is one of the five types (D1 to D5) of receptors for dopamine. The activity of this receptor is mediated by G proteins which inhibits adenylyl cyclase. In Xenopus D2R is involved in the regulation of the melanotrope cells of the intermediate pituitary during background adaptation of the animal. The polypeptide is D(2) dopamine receptor B (drd2-b) (Xenopus laevis (African clawed frog)).